Here is a 220-residue protein sequence, read N- to C-terminus: Protein GrpE (220 aa).

2 stretches are compositionally biased toward polar residues: residues 1–12 and 50–63; these read MEQGDKQATYNE and AASTTADPAEQTSV. Positions 1–67 are disordered; sequence MEQGDKQATY…AEQTSVEAEE (67 aa).

It belongs to the GrpE family. In terms of assembly, homodimer.

It is found in the cytoplasm. Functionally, participates actively in the response to hyperosmotic and heat shock by preventing the aggregation of stress-denatured proteins, in association with DnaK and GrpE. It is the nucleotide exchange factor for DnaK and may function as a thermosensor. Unfolded proteins bind initially to DnaJ; upon interaction with the DnaJ-bound protein, DnaK hydrolyzes its bound ATP, resulting in the formation of a stable complex. GrpE releases ADP from DnaK; ATP binding to DnaK triggers the release of the substrate protein, thus completing the reaction cycle. Several rounds of ATP-dependent interactions between DnaJ, DnaK and GrpE are required for fully efficient folding. This is Protein GrpE from Geobacillus thermodenitrificans (strain NG80-2).